The sequence spans 238 residues: Ribitol-5-phosphate cytidylyltransferase (238 aa).

CTP-binding positions include 7-10 (LAGG) and 81-87 (GDDRNHT).

Belongs to the IspD/TarI cytidylyltransferase family. TarI subfamily.

The catalysed reaction is D-ribitol 5-phosphate + CTP + H(+) = CDP-L-ribitol + diphosphate. Its pathway is cell wall biogenesis; poly(ribitol phosphate) teichoic acid biosynthesis. Its function is as follows. Catalyzes the transfer of the cytidylyl group of CTP to D-ribitol 5-phosphate. The protein is Ribitol-5-phosphate cytidylyltransferase of Staphylococcus epidermidis (strain ATCC 35984 / DSM 28319 / BCRC 17069 / CCUG 31568 / BM 3577 / RP62A).